Consider the following 359-residue polypeptide: tRNA-specific 2-thiouridylase MnmA (359 aa).

ATP contacts are provided by residues 11–18 and Ile-37; that span reads GISGGVDS. The active-site Nucleophile is Cys-99. Cys-99 and Cys-195 are joined by a disulfide. Gly-123 lines the ATP pocket. The segment at 145–147 is interaction with tRNA; that stretch reads KDQ. Cys-195 acts as the Cysteine persulfide intermediate in catalysis. The tract at residues 304-305 is interaction with tRNA; it reads RY.

The protein belongs to the MnmA/TRMU family.

It is found in the cytoplasm. It carries out the reaction S-sulfanyl-L-cysteinyl-[protein] + uridine(34) in tRNA + AH2 + ATP = 2-thiouridine(34) in tRNA + L-cysteinyl-[protein] + A + AMP + diphosphate + H(+). In terms of biological role, catalyzes the 2-thiolation of uridine at the wobble position (U34) of tRNA, leading to the formation of s(2)U34. The protein is tRNA-specific 2-thiouridylase MnmA of Chlorobium phaeobacteroides (strain BS1).